A 333-amino-acid polypeptide reads, in one-letter code: Glycerol-3-phosphate dehydrogenase [NAD(P)+] (333 aa).

Residues Ser-10, Trp-11, His-31, Arg-32, and Lys-105 each contribute to the NADPH site. Residues Lys-105, Gly-136, and Ser-138 each coordinate sn-glycerol 3-phosphate. Ala-140 contacts NADPH. Residues Lys-191, Asp-244, Ser-254, Arg-255, and Asn-256 each contribute to the sn-glycerol 3-phosphate site. Lys-191 functions as the Proton acceptor in the catalytic mechanism. Arg-255 provides a ligand contact to NADPH. Residues Ile-279 and Glu-281 each contribute to the NADPH site.

The protein belongs to the NAD-dependent glycerol-3-phosphate dehydrogenase family.

The protein localises to the cytoplasm. The enzyme catalyses sn-glycerol 3-phosphate + NAD(+) = dihydroxyacetone phosphate + NADH + H(+). It catalyses the reaction sn-glycerol 3-phosphate + NADP(+) = dihydroxyacetone phosphate + NADPH + H(+). It participates in membrane lipid metabolism; glycerophospholipid metabolism. Its function is as follows. Catalyzes the reduction of the glycolytic intermediate dihydroxyacetone phosphate (DHAP) to sn-glycerol 3-phosphate (G3P), the key precursor for phospholipid synthesis. The polypeptide is Glycerol-3-phosphate dehydrogenase [NAD(P)+] (Pelodictyon phaeoclathratiforme (strain DSM 5477 / BU-1)).